Consider the following 349-residue polypeptide: 4-hydroxythreonine-4-phosphate dehydrogenase (349 aa).

Histidine 141 and threonine 142 together coordinate substrate. Residues histidine 176, histidine 221, and histidine 276 each contribute to the a divalent metal cation site. Substrate contacts are provided by lysine 284, asparagine 293, and arginine 302.

It belongs to the PdxA family. Homodimer. Zn(2+) serves as cofactor. The cofactor is Mg(2+). Co(2+) is required as a cofactor.

It is found in the cytoplasm. It carries out the reaction 4-(phosphooxy)-L-threonine + NAD(+) = 3-amino-2-oxopropyl phosphate + CO2 + NADH. It functions in the pathway cofactor biosynthesis; pyridoxine 5'-phosphate biosynthesis; pyridoxine 5'-phosphate from D-erythrose 4-phosphate: step 4/5. Functionally, catalyzes the NAD(P)-dependent oxidation of 4-(phosphooxy)-L-threonine (HTP) into 2-amino-3-oxo-4-(phosphooxy)butyric acid which spontaneously decarboxylates to form 3-amino-2-oxopropyl phosphate (AHAP). The chain is 4-hydroxythreonine-4-phosphate dehydrogenase from Methylorubrum extorquens (strain PA1) (Methylobacterium extorquens).